Here is a 141-residue protein sequence, read N- to C-terminus: Auxin-responsive protein SAUR62 (141 aa).

This sequence belongs to the ARG7 family. Expressed in stamen filaments and petals.

The protein resides in the cell membrane. May promote auxin-stimulated organ elongation, such as hypocotyls, stamen filaments and petals. The protein is Auxin-responsive protein SAUR62 of Arabidopsis thaliana (Mouse-ear cress).